A 727-amino-acid chain; its full sequence is Plakophilin-1 (727 aa).

The tract at residues 1-235 (MNHSPLKTAL…SFSHSRASSK (235 aa)) is required for binding to single stranded DNA. Positions 1–287 (MNHSPLKTAL…ESAKQQVYQL (287 aa)) are required for interaction with EIF4A1. Phosphoserine is present on serine 4. A disordered region spans residues 48–69 (TVKRQKSKSSQSSTLSHSNRGS). Phosphorylation in this region is required for cytoplasmic localization and protein stabilization stretches follow at residues 54–69 (SKSS…NRGS) and 117–192 (RFSS…STCS). Phosphoserine occurs at positions 119, 120, 122, and 143. The required for WNT-mediated nuclear localization stretch occupies residues 161 to 270 (YCDPRGTLRK…KCQAIGAYYI (110 aa)). ARM repeat units follow at residues 244 to 275 (SGLT…HTCF), 276 to 317 (QDES…NLVF), 318 to 360 (RSTT…NLSS), 361 to 412 (TDEL…GCLR), 413 to 443 (NLSS…NCVA), 505 to 536 (NYDC…LNLM), 537 to 583 (GKSK…IARL), 584 to 629 (LQSG…SHTG), and 630 to 693 (NTSN…DMWS).

The protein belongs to the beta-catenin family. Part of a complex that contains DSG3, PKP1, YAP1 and YWHAG; the complex is required for localization of DSG3 and YAP1 to the cell membrane in keratinocytes. Interacts (via N-terminus) with KRT5/CK5, KRT8/CK8 (via rod domain), KRT15/CK15 and KRT18/CK18 (via rod domain) as part of intermediate filaments. Interacts with VIM (via rod domain). Interacts with DSP. Interacts with DES. Interacts with FXR1; the interaction may facilitate the binding of PKP1 to PKP2, PKP3 and DSP mRNA. Interacts (via N-terminus) with EIF4A1; the interaction promotes EIF4A1 recruitment to the cap-dependent translation complex and EIF4A1 ATPase activity. Interacts with TJP1/ZO-1; the interaction facilitates TJP1/ZO-1 localization to the plasma membrane. Interacts (when phosphorylated) with YWHAG; the interaction results in translocation of PKP1 to the cytoplasm and loss of intercellular adhesion in keratinocytes. Phosphorylated by AKT2; required for interaction with YWHAG and subsequent localization away from desmosomes to the cytoplasm. Phosphorylation of Ser-119 by AKT2 promotes PKP1-driven cap-dependent mRNA translation and decreases intercellular adhesion, phosphorylation is promoted by insulin. Phosphorylation by RIPK4 at the N-terminus is required for its role in differentiation of keratinocytes and DSG1 localization at cell junctions.

The protein localises to the nucleus. It is found in the cytoplasm. The protein resides in the perinuclear region. It localises to the cell junction. Its subcellular location is the desmosome. The protein localises to the cell membrane. It is found in the stress granule. A component of desmosome cell-cell junctions which are required for positive regulation of cellular adhesion. Plays a role in desmosome protein expression regulation and localization to the desmosomal plaque, thereby maintaining cell sheet integrity and anchorage of desmosomes to intermediate filaments. Required for localization of DSG3 and YAP1 to the cell membrane in keratinocytes in response to mechanical strain, via the formation of an interaction complex composed of DSG3, YAP1, PKP1 and YWHAG. Positively regulates differentiation of keratinocytes, potentially via promoting localization of DSG1 at desmosome cell junctions. Required for calcium-independent development and maturation of desmosome plaques specifically at lateral cell-cell contacts in differentiating keratinocytes. Plays a role in the maintenance of DSG3 protein abundance, DSG3 clustering and localization of these clusters to the cell membrane in keratinocytes. May also promote keratinocyte proliferation and morphogenesis during postnatal development. Required for tight junction inside-out transepidermal barrier function of the skin. Promotes Wnt-mediated proliferation and differentiation of ameloblasts, via facilitating TJP1/ZO-1 localization to tight junctions. Binds single-stranded DNA (ssDNA), and may thereby play a role in sensing DNA damage and promoting cell survival. Positively regulates cap-dependent translation and as a result cell proliferation, via recruitment of EIF4A1 to the initiation complex and promotion of EIF4A1 ATPase activity. Regulates the mRNA stability and protein abundance of desmosome components PKP2, PKP3, DSC2 and DSP, potentially via its interaction with FXR1. May facilitate the formation of intermediate filaments. The protein is Plakophilin-1 (PKP1) of Bos taurus (Bovine).